The primary structure comprises 185 residues: Threonylcarbamoyl-AMP synthase (185 aa).

The YrdC-like domain maps to 4–185; the sequence is SWRVQQAARE…LATGNIVRPA (182 aa).

The protein belongs to the SUA5 family. TsaC subfamily.

The protein localises to the cytoplasm. The enzyme catalyses L-threonine + hydrogencarbonate + ATP = L-threonylcarbamoyladenylate + diphosphate + H2O. In terms of biological role, required for the formation of a threonylcarbamoyl group on adenosine at position 37 (t(6)A37) in tRNAs that read codons beginning with adenine. Catalyzes the conversion of L-threonine, HCO(3)(-)/CO(2) and ATP to give threonylcarbamoyl-AMP (TC-AMP) as the acyladenylate intermediate, with the release of diphosphate. This is Threonylcarbamoyl-AMP synthase from Pseudomonas fluorescens (strain Pf0-1).